Here is a 335-residue protein sequence, read N- to C-terminus: UPF0353 protein MAP_3435c (335 aa).

2 helical membrane-spanning segments follow: residues 18–38 (WFFLALLAVLLVIGLYVVQQF) and 67–87 (VPTILLATSLVLLTTAMAGPT). The VWFA domain maps to 98–294 (VVMLVIDVSE…DSLKNVYSTL (197 aa)). The chain crosses the membrane as a helical span at residues 309 to 329 (MAWMLLGAVVLAGAVLAGLLL).

This sequence belongs to the UPF0353 family.

The protein resides in the cell membrane. The protein is UPF0353 protein MAP_3435c of Mycolicibacterium paratuberculosis (strain ATCC BAA-968 / K-10) (Mycobacterium paratuberculosis).